A 685-amino-acid polypeptide reads, in one-letter code: Transforming growth factor beta activator LRRC33 (685 aa).

Residues 1-27 (MPVCGCLSVVLSHAVVLLMLVLHSASG) form the signal peptide. Topologically, residues 28–640 (HPQTFPCRLI…CGFTNNNKES (613 aa)) are extracellular. In terms of domain architecture, LRRNT spans 29-56 (PQTFPCRLIQRVALCSGRQLSVIPDCLP). LRR repeat units lie at residues 57-79 (HETEEIFFDRNLLENLQDGLSRY), 80-102 (PFLRMFSCANNQLMTVAETAFIE), 103-129 (SHLLENLNLANNELHHGHKQVAQAFRS), 130-154 (LTQLKTLDLSGNGLSEDMVSVLVAN), 155-178 (LSSLESLYLSRNGMQRLDESTFRD), 180-201 (HQLKELNVERNLLFEISGAFDH), and 202-225 (MKKLQRLNLAFNCLPCLVNFEMTQ). Residue asparagine 154 is glycosylated (N-linked (GlcNAc...) asparagine). N-linked (GlcNAc...) asparagine glycosylation is found at asparagine 230 and asparagine 244. LRR repeat units lie at residues 248-271 (TFQLETLDLSDNHLLFFPFLPTNN) and 273-296 (IRTLLLSNNRVGFYQHLANSTSSN). 5 N-linked (GlcNAc...) asparagine glycosylation sites follow: asparagine 291, asparagine 296, asparagine 309, asparagine 312, and asparagine 325. 11 LRR repeats span residues 326-349 (LSSVEFLDLSENKVNYFPQGFIKQ), 351-373 (PQLYWLKLRSNCLQSFSLTSEDL), 374-397 (PVTIYELDVSRNRLTEIKASQTSK), 400-423 (LNNLTHLNLSTNDLQNFPPMIFTS), 425-447 (PNLNTLDLSHNTVDVCYSSNYMG), 457-480 (MASLKQLYLADCSIQNVPSSAFKG), 482-503 (SLTHLELSNNPNLHLKQQSLKG), 505-526 (ANTLQHLGIGNTGLQDFDFSPY), 527-549 (TNLKSLNISRNSLSKLPDSLMAL), 551-571 (LKLLDLRDNSLTTIKSEHASL), and 573-596 (AKKLQTVYMNGNAFNCCHLDWFRT). 2 N-linked (GlcNAc...) asparagine glycosylation sites follow: asparagine 402 and asparagine 407. The N-linked (GlcNAc...) asparagine glycan is linked to asparagine 533. Positions 597–635 (FGENKGIHVADLSEITCLDLNYRRHKVVLTDAVYCGFTN) constitute an LRRCT domain. The chain crosses the membrane as a helical span at residues 641 to 661 (VVWYILLFVTVSVSIMGISVI). The Cytoplasmic portion of the chain corresponds to 662 to 685 (YMLTFKPRMLPRVIKKKCWRPTSY).

The protein belongs to the LRRC32/LRRC33 family.

It is found in the cell membrane. The protein resides in the endoplasmic reticulum membrane. Its function is as follows. Key regulator of transforming growth factor beta-1 (TGFB1) specifically required for microglia function in the nervous system. Required for activation of latent TGF-beta-1 in macrophages and microglia: associates specifically via disulfide bonds with the Latency-associated peptide (LAP), which is the regulatory chain of TGFB1, and regulates integrin-dependent activation of TGF-beta-1. TGF-beta-1 activation mediated by lrrc33/nrros is highly localized: there is little spreading of TGF-beta-1 activated from one microglial cell to neighboring microglia, suggesting the existence of localized and selective activation of TGF-beta-1 by lrrc33/nrros. The chain is Transforming growth factor beta activator LRRC33 from Danio rerio (Zebrafish).